We begin with the raw amino-acid sequence, 206 residues long: Small ribosomal subunit protein uS4 (206 aa).

The tract at residues 18-46 is disordered; the sequence is NIWGRPKSPVNRREYGPGQHGQRRKGKLS. The S4 RNA-binding domain maps to 94-156; that stretch reads RRLDAVVYRA…SKQNVAVLEA (63 aa).

Belongs to the universal ribosomal protein uS4 family. In terms of assembly, part of the 30S ribosomal subunit. Contacts protein S5. The interaction surface between S4 and S5 is involved in control of translational fidelity.

In terms of biological role, one of the primary rRNA binding proteins, it binds directly to 16S rRNA where it nucleates assembly of the body of the 30S subunit. Its function is as follows. With S5 and S12 plays an important role in translational accuracy. This chain is Small ribosomal subunit protein uS4, found in Ruegeria sp. (strain TM1040) (Silicibacter sp.).